Consider the following 476-residue polypeptide: Bifunctional protein HldE (476 aa).

Positions 1–318 are ribokinase; that stretch reads MKVTLPEFER…ENAVRGRADT (318 aa). An ATP-binding site is contributed by 195-198; it reads NLSE. Residue Asp264 is part of the active site. Residues 344-476 are cytidylyltransferase; it reads MTNGVFDILH…IIKKIQKDSQ (133 aa).

The protein in the N-terminal section; belongs to the carbohydrate kinase PfkB family. It in the C-terminal section; belongs to the cytidylyltransferase family. Homodimer.

The catalysed reaction is D-glycero-beta-D-manno-heptose 7-phosphate + ATP = D-glycero-beta-D-manno-heptose 1,7-bisphosphate + ADP + H(+). It carries out the reaction D-glycero-beta-D-manno-heptose 1-phosphate + ATP + H(+) = ADP-D-glycero-beta-D-manno-heptose + diphosphate. It functions in the pathway nucleotide-sugar biosynthesis; ADP-L-glycero-beta-D-manno-heptose biosynthesis; ADP-L-glycero-beta-D-manno-heptose from D-glycero-beta-D-manno-heptose 7-phosphate: step 1/4. Its pathway is nucleotide-sugar biosynthesis; ADP-L-glycero-beta-D-manno-heptose biosynthesis; ADP-L-glycero-beta-D-manno-heptose from D-glycero-beta-D-manno-heptose 7-phosphate: step 3/4. Catalyzes the phosphorylation of D-glycero-D-manno-heptose 7-phosphate at the C-1 position to selectively form D-glycero-beta-D-manno-heptose-1,7-bisphosphate. Functionally, catalyzes the ADP transfer from ATP to D-glycero-beta-D-manno-heptose 1-phosphate, yielding ADP-D-glycero-beta-D-manno-heptose. The chain is Bifunctional protein HldE from Enterobacter sp. (strain 638).